Reading from the N-terminus, the 492-residue chain is Probable glycine dehydrogenase (decarboxylating) subunit 2 (492 aa).

Lys274 is modified (N6-(pyridoxal phosphate)lysine).

The protein belongs to the GcvP family. C-terminal subunit subfamily. In terms of assembly, the glycine cleavage system is composed of four proteins: P, T, L and H. In this organism, the P 'protein' is a heterodimer of two subunits. Pyridoxal 5'-phosphate serves as cofactor.

The enzyme catalyses N(6)-[(R)-lipoyl]-L-lysyl-[glycine-cleavage complex H protein] + glycine + H(+) = N(6)-[(R)-S(8)-aminomethyldihydrolipoyl]-L-lysyl-[glycine-cleavage complex H protein] + CO2. The glycine cleavage system catalyzes the degradation of glycine. The P protein binds the alpha-amino group of glycine through its pyridoxal phosphate cofactor; CO(2) is released and the remaining methylamine moiety is then transferred to the lipoamide cofactor of the H protein. The chain is Probable glycine dehydrogenase (decarboxylating) subunit 2 from Staphylococcus saprophyticus subsp. saprophyticus (strain ATCC 15305 / DSM 20229 / NCIMB 8711 / NCTC 7292 / S-41).